Consider the following 246-residue polypeptide: 1-(5-phosphoribosyl)-5-[(5-phosphoribosylamino)methylideneamino] imidazole-4-carboxamide isomerase (246 aa).

Residue aspartate 8 is the Proton acceptor of the active site. The Proton donor role is filled by aspartate 131.

This sequence belongs to the HisA/HisF family.

The protein localises to the cytoplasm. The enzyme catalyses 1-(5-phospho-beta-D-ribosyl)-5-[(5-phospho-beta-D-ribosylamino)methylideneamino]imidazole-4-carboxamide = 5-[(5-phospho-1-deoxy-D-ribulos-1-ylimino)methylamino]-1-(5-phospho-beta-D-ribosyl)imidazole-4-carboxamide. The protein operates within amino-acid biosynthesis; L-histidine biosynthesis; L-histidine from 5-phospho-alpha-D-ribose 1-diphosphate: step 4/9. The protein is 1-(5-phosphoribosyl)-5-[(5-phosphoribosylamino)methylideneamino] imidazole-4-carboxamide isomerase of Polaromonas naphthalenivorans (strain CJ2).